The chain runs to 332 residues: Palmitoyltransferase PFA3 (332 aa).

At 1-13 the chain is on the cytoplasmic side; sequence MNLVNNFSKLFPR. Residues 14 to 34 traverse the membrane as a helical segment; it reads CLTTGLYLWSLYAIVVCIHVI. At 35-37 the chain is on the lumenal side; sequence RAR. The chain crosses the membrane as a helical span at residues 38 to 58; sequence VVLPLVFTIAMVALYTYAKLI. Over 59 to 147 the chain is Cytoplasmic; that stretch reads YVGPGTTKEY…AGCVGYRNQK (89 aa). The region spanning 104 to 154 is the DHHC domain; that stretch reads RVCKSCSSWKPDRCHHCSTCNVCVLKMDHHCPWFAGCVGYRNQKFFIQFLI. The helical transmembrane segment at 148 to 168 threads the bilayer; that stretch reads FFIQFLIYCTVYSILVLILSS. Residues 169–188 are Lumenal-facing; it reads MEIYTWFKGEFFEVELINFT. A helical transmembrane segment spans residues 189 to 209; that stretch reads LLSLWLLALVVSISITIFTVF. At 210–332 the chain is on the cytoplasmic side; that stretch reads SISQVCQNQT…SLDVDRSNFV (123 aa).

It belongs to the DHHC palmitoyltransferase family. PFA3 subfamily. Autopalmitoylated.

The protein resides in the vacuole membrane. The enzyme catalyses L-cysteinyl-[protein] + hexadecanoyl-CoA = S-hexadecanoyl-L-cysteinyl-[protein] + CoA. In terms of biological role, palmitoyltransferase specific for VAC8. Palmitoylates VAC8 at one or more of its N-terminal cysteine residues, which is required for its proper membrane localization. In Candida glabrata (strain ATCC 2001 / BCRC 20586 / JCM 3761 / NBRC 0622 / NRRL Y-65 / CBS 138) (Yeast), this protein is Palmitoyltransferase PFA3 (PFA3).